We begin with the raw amino-acid sequence, 460 residues long: Light-independent protochlorophyllide reductase subunit N (460 aa).

Residues C20, C45, and C105 each coordinate [4Fe-4S] cluster.

The protein belongs to the BchN/ChlN family. Protochlorophyllide reductase is composed of three subunits; ChlL, ChlN and ChlB. Forms a heterotetramer of two ChlB and two ChlN subunits. Requires [4Fe-4S] cluster as cofactor.

It is found in the plastid. The protein localises to the chloroplast. It carries out the reaction chlorophyllide a + oxidized 2[4Fe-4S]-[ferredoxin] + 2 ADP + 2 phosphate = protochlorophyllide a + reduced 2[4Fe-4S]-[ferredoxin] + 2 ATP + 2 H2O. Its pathway is porphyrin-containing compound metabolism; chlorophyll biosynthesis (light-independent). Functionally, component of the dark-operative protochlorophyllide reductase (DPOR) that uses Mg-ATP and reduced ferredoxin to reduce ring D of protochlorophyllide (Pchlide) to form chlorophyllide a (Chlide). This reaction is light-independent. The NB-protein (ChlN-ChlB) is the catalytic component of the complex. The chain is Light-independent protochlorophyllide reductase subunit N from Adiantum capillus-veneris (Maidenhair fern).